A 466-amino-acid chain; its full sequence is Mitochondrial-processing peptidase subunit beta (466 aa).

His-73 contacts Zn(2+). Residue Glu-76 is the Proton acceptor of the active site. The Zn(2+) site is built by His-77 and Glu-153.

It belongs to the peptidase M16 family. In terms of assembly, heterodimer of mppA (alpha) and mppB (beta) subunits, forming the mitochondrial processing protease (MPP) in which mppA is involved in substrate recognition and binding and mppB is the catalytic subunit. Requires Zn(2+) as cofactor.

The protein resides in the mitochondrion matrix. It catalyses the reaction Release of N-terminal transit peptides from precursor proteins imported into the mitochondrion, typically with Arg in position P2.. Its activity is regulated as follows. Binding to mppA is required for catalytic activity. Its function is as follows. Catalytic subunit of the essential mitochondrial processing protease (MPP), which cleaves the mitochondrial sequence off newly imported precursors proteins. Preferentially, cleaves after an arginine at position P2. The polypeptide is Mitochondrial-processing peptidase subunit beta (mppB) (Lentinula edodes (Shiitake mushroom)).